The chain runs to 239 residues: Superoxide dismutase [Mn] 3 (239 aa).

A compositionally biased stretch (polar residues) spans 1-19 (ASTQQTPAQSPTASPTVST). The tract at residues 1-20 (ASTQQTPAQSPTASPTVSTP) is disordered. The first 30 residues, 1–30 (ASTQQTPAQSPTASPTVSTPVAYVDRPLTA), serve as a signal peptide directing secretion. Mn(2+) is bound by residues histidine 57, histidine 112, aspartate 195, and histidine 199.

This sequence belongs to the iron/manganese superoxide dismutase family. Homodimer. Mn(2+) serves as cofactor.

It catalyses the reaction 2 superoxide + 2 H(+) = H2O2 + O2. In terms of biological role, destroys superoxide anion radicals which are normally produced within the cells and which are toxic to biological systems. This is Superoxide dismutase [Mn] 3 (sodA3) from Leptolyngbya boryana (Plectonema boryanum).